The chain runs to 261 residues: F-actin-capping protein subunit alpha (261 aa).

The protein belongs to the F-actin-capping protein alpha subunit family. As to quaternary structure, heterodimer of an alpha and a beta subunit.

F-actin-capping proteins bind in a Ca(2+)-independent manner to the fast growing ends of actin filaments (barbed end) thereby blocking the exchange of subunits at these ends. Unlike other capping proteins (such as gelsolin and severin), these proteins do not sever actin filaments. This is F-actin-capping protein subunit alpha (CAP1) from Eremothecium gossypii (strain ATCC 10895 / CBS 109.51 / FGSC 9923 / NRRL Y-1056) (Yeast).